Here is a 393-residue protein sequence, read N- to C-terminus: Iripin-5 (393 aa).

The N-terminal stretch at 1 to 16 is a signal peptide; it reads MKTLIVLMCSLVVVWA. N-linked (GlcNAc...) asparagine glycosylation is found at asparagine 198 and asparagine 245.

This sequence belongs to the serpin family. As to expression, highly expressed in female salivary gland during blood feeding. Expressed in female midgut and ovary during blood feeding.

The protein resides in the secreted. Functionally, serine protease inhibitor that modulates blood feeding of ticks on vertebrate species. Inhibits host neutrophil elastase (ELANE) and proteinase 3/myeloblastin (PRTN3). Moderately inhibits host chymase, cathepsin G (CTSG), trypsin and alpha-chymotrypsin. Decreases host neutrophil migration. Decreases nitric oxide production by host macrophages. Decreases host complement activity. This chain is Iripin-5, found in Ixodes ricinus (Common tick).